We begin with the raw amino-acid sequence, 184 residues long: uncharacterized protein (184 aa).

The protein belongs to the TorD/DmsD family.

This is an uncharacterized protein from Haemophilus influenzae (strain ATCC 51907 / DSM 11121 / KW20 / Rd).